A 318-amino-acid polypeptide reads, in one-letter code: Olfactory receptor 13C7 (318 aa).

Residues 1–27 (MVSANQTASVTEFILLGLSAHPKLEKT) are Extracellular-facing. A helical membrane pass occupies residues 28–48 (FFVLILLMYLVILLGNGVLIL). The Cytoplasmic segment spans residues 49-61 (MTVSNSHLHMPMY). A helical membrane pass occupies residues 62–82 (FFLGNLSFLDICYTTSSVPLI). At 83-100 (LDSFLTPRKTISFSACAV) the chain is on the extracellular side. Residues 101 to 121 (QMFLSFAMGATECVLLSMMAF) traverse the membrane as a helical segment. Residues 122–181 (DRYVAICNPLRYPVVMSKAAYMPKAAGSWVAGSTASMVQTSLAMRLPFCGDNIINHFTCE) lie on the Cytoplasmic side of the membrane. The chain crosses the membrane as a helical span at residues 182–202 (ILAVLKLACADISVNVISMGV). Residues 203-205 (TNV) are Extracellular-facing. The chain crosses the membrane as a helical span at residues 206-226 (IFLGVPVLFISFSYVFIIATI). At 227 to 238 (LRIPSAEGRKKA) the chain is on the cytoplasmic side. The chain crosses the membrane as a helical span at residues 239–259 (FSTCSAHLTVVVIFYGTILFM). At 260–278 (YGKPKSKDPLGADKQDLAD) the chain is on the extracellular side. Residues 279 to 289 (KLISLFYGVVT) form a helical membrane-spanning segment. Topologically, residues 290-318 (PMLNPIIYSLRNKDVKAAVRDLIFQKCFA) are cytoplasmic.

The protein belongs to the G-protein coupled receptor 1 family.

The protein localises to the cell membrane. Its function is as follows. Odorant receptor. The chain is Olfactory receptor 13C7 from Homo sapiens (Human).